A 373-amino-acid chain; its full sequence is Glutamate 5-kinase (373 aa).

Residue Lys-16 participates in ATP binding. Substrate-binding residues include Ser-56, Asp-143, and Asn-155. 175–176 (TD) provides a ligand contact to ATP. The 79-residue stretch at 281–359 (RGRLTLDDGA…SRIDSLLGYK (79 aa)) folds into the PUA domain.

It belongs to the glutamate 5-kinase family.

It is found in the cytoplasm. The catalysed reaction is L-glutamate + ATP = L-glutamyl 5-phosphate + ADP. Its pathway is amino-acid biosynthesis; L-proline biosynthesis; L-glutamate 5-semialdehyde from L-glutamate: step 1/2. Catalyzes the transfer of a phosphate group to glutamate to form L-glutamate 5-phosphate. The chain is Glutamate 5-kinase from Saccharophagus degradans (strain 2-40 / ATCC 43961 / DSM 17024).